The following is a 335-amino-acid chain: MNKINAAITAVGAYLPEDVITNDDLEKMVDTNDEWIMTRVGIKERRILRDKNKGASYLAIRAAQDLFDRHGIDPKSIDGLILATNSSDYHFPSTASIVAHEIGCGDIFSFDMQAACPTFIYALEVGANFIRSGRYSKILVIATEKMTAFTDYTDRATCPLFGDGAGCVLLEATEEEVGVMDAVLHSNGIGKDHLIMKAGGSACPATHETVDNRWHYVYQEGQVVFKHAVVDMCNSCVEIMERNNLSHDDITWVVPHQANLRIIDAVARRMGVPYEKVMVNIERYGNTSSATIPICLWEWEHKLKKGDVLVMTSFGAGFTWGAVYVKWAYDGSTVR.

Residues Cys-116 and His-256 contribute to the active site. Residues 257 to 261 (QANLR) are ACP-binding. Asn-286 is a catalytic residue.

This sequence belongs to the thiolase-like superfamily. FabH family. As to quaternary structure, homodimer.

It localises to the cytoplasm. It carries out the reaction malonyl-[ACP] + acetyl-CoA + H(+) = 3-oxobutanoyl-[ACP] + CO2 + CoA. It functions in the pathway lipid metabolism; fatty acid biosynthesis. Functionally, catalyzes the condensation reaction of fatty acid synthesis by the addition to an acyl acceptor of two carbons from malonyl-ACP. Catalyzes the first condensation reaction which initiates fatty acid synthesis and may therefore play a role in governing the total rate of fatty acid production. Possesses both acetoacetyl-ACP synthase and acetyl transacylase activities. Its substrate specificity determines the biosynthesis of branched-chain and/or straight-chain of fatty acids. The protein is Beta-ketoacyl-[acyl-carrier-protein] synthase III of Porphyromonas gingivalis (strain ATCC 33277 / DSM 20709 / CIP 103683 / JCM 12257 / NCTC 11834 / 2561).